The following is a 152-amino-acid chain: Deoxyuridine 5'-triphosphate nucleotidohydrolase (152 aa).

Substrate is bound by residues 71-73 (RSG), Asn84, 88-90 (LID), and Met98.

Belongs to the dUTPase family. Mg(2+) serves as cofactor.

The catalysed reaction is dUTP + H2O = dUMP + diphosphate + H(+). The protein operates within pyrimidine metabolism; dUMP biosynthesis; dUMP from dCTP (dUTP route): step 2/2. Functionally, this enzyme is involved in nucleotide metabolism: it produces dUMP, the immediate precursor of thymidine nucleotides and it decreases the intracellular concentration of dUTP so that uracil cannot be incorporated into DNA. The sequence is that of Deoxyuridine 5'-triphosphate nucleotidohydrolase from Shewanella putrefaciens (strain CN-32 / ATCC BAA-453).